The sequence spans 75 residues: MELEAAKMIGAGLAAIALAGAGVGIGIIFGNYLSGAMRNPSAAQKQFPNLLLGFALAEATGLFGLVVALIILFAF.

The next 2 membrane-spanning stretches (helical) occupy residues 9–29 (IGAG…GIIF) and 54–74 (FALA…ILFA).

Belongs to the ATPase C chain family. As to quaternary structure, F-type ATPases have 2 components, F(1) - the catalytic core - and F(0) - the membrane proton channel. F(1) has five subunits: alpha(3), beta(3), gamma(1), delta(1), epsilon(1). F(0) has three main subunits: a(1), b(2) and c(10-14). The alpha and beta chains form an alternating ring which encloses part of the gamma chain. F(1) is attached to F(0) by a central stalk formed by the gamma and epsilon chains, while a peripheral stalk is formed by the delta and b chains.

It localises to the cell inner membrane. In terms of biological role, f(1)F(0) ATP synthase produces ATP from ADP in the presence of a proton or sodium gradient. F-type ATPases consist of two structural domains, F(1) containing the extramembraneous catalytic core and F(0) containing the membrane proton channel, linked together by a central stalk and a peripheral stalk. During catalysis, ATP synthesis in the catalytic domain of F(1) is coupled via a rotary mechanism of the central stalk subunits to proton translocation. Functionally, key component of the F(0) channel; it plays a direct role in translocation across the membrane. A homomeric c-ring of between 10-14 subunits forms the central stalk rotor element with the F(1) delta and epsilon subunits. The sequence is that of ATP synthase subunit c from Pelagibacter ubique (strain HTCC1062).